A 539-amino-acid chain; its full sequence is Protein Wnt-4 (539 aa).

The first 21 residues, 1 to 21, serve as a signal peptide directing secretion; it reads MPSPTGVFVLMILTHLSFGLG. The segment at 34–77 is disordered; that stretch reads QNGDLDSSNPAIHHQQHQQHQQHQQHQQHQSNHNLNNGNMNSTI. Positions 51–74 are enriched in low complexity; it reads QQHQQHQQHQQHQSNHNLNNGNMN. N-linked (GlcNAc...) asparagine glycosylation is found at Asn-74 and Asn-284. 5 cysteine pairs are disulfide-bonded: Cys-274–Cys-285, Cys-322–Cys-330, Cys-332–Cys-349, Cys-397–Cys-411, and Cys-399–Cys-406. Ser-403 carries the O-palmitoleoyl serine; by PORCN lipid modification. The N-linked (GlcNAc...) asparagine glycan is linked to Asn-419. The interval 436 to 463 is disordered; sequence APNQRSMRQVSSSRMKKPKQRRKKPQQS. The segment covering 439–448 has biased composition (low complexity); sequence QRSMRQVSSS. Residues 449–460 are compositionally biased toward basic residues; that stretch reads RMKKPKQRRKKP. Cystine bridges form between Cys-478–Cys-497, Cys-486–Cys-492, Cys-496–Cys-538, Cys-512–Cys-529, Cys-514–Cys-526, and Cys-521–Cys-522.

Belongs to the Wnt family. Palmitoleoylated by porcupine. The lipid group functions as a sorting signal, targeting the ligand to polarized vesicles that transport Wnt4 to unique sites at the cell surface. Depalmitoleoylated by notum, leading to inhibit Wnt signaling pathway.

It is found in the secreted. The protein resides in the extracellular space. Its subcellular location is the extracellular matrix. Its function is as follows. Binds as a ligand to a family of frizzled seven-transmembrane receptors and acts through a cascade of genes on the nucleus. Acts downstream of homeotic complex genes in the visceral mesoderm and is required for embryonic segmentation. Also required for cell movement and FAK regulation during ovarian morphogenesis. This chain is Protein Wnt-4 (Wnt4), found in Drosophila melanogaster (Fruit fly).